The sequence spans 878 residues: MADIDARLREDVHLLGELLGNTIREQRGAEFLDKIERIRKGAKAGRRGSAEGAEQLSSSVDGLGDDELLPVARAFNQFLNLANIAEQYQLMHRRDDKQPLPFESRVLPELLDRLKAEGHSPDALARQLSKLEIDLVLTAHPTEVARRTLIQKYDAIAAQLAALDHRDLNSIERTQITSRLQRLIAEAWHTEEIRRIRPTPVDEAKWGFAVIEHSLWHAIPNYLRKADHALHAATGLHLPLEAAPIRFASWMGGDRDGNPNVTAAVTREVLLLARWMAADLYLRDVDNLAAELSMQQASDALRASVGDSAEPYRAELKRLRERLRATRNWANASLSETLPAPEAVLRDNRELLDPLLLCFQSLHECGMGVIADGPLLDCLRRAVTFGLFLVRLDVRQDSSRHCAAMTEITDYLGLGRYEEWDEQTRIDFLLRELNNRRPLLPSYFKPAADTAEVLATCREVAAAPAASLGSYVISMAGSASDVLAVQLLLKESGLQRPMRVVPLFETLADLDNAGPVIETLLGLPGYRSRLHGPQEVMIGYSDSAKDAGTTAAAWAQYRAQERLVEICREQQVELLLFHGRGGTVGRGGGPAHAAILSQPPGSVAGRFRTTEQGEMIRFKFGLPDIAEQNLNLYLAAVLEATLLPPPPPQPAWRTMMDQMADDGVSAYRAVVRENPEFVEYFRQATPEQELGRLPLGSRPAKRREGGVESLRAIPWIFAWTQTRLMLPAWLGWEAALSKALERGEGEVLAQMREQWPFFRTRIDMLEMVLAKADADIARLYDERLVSAELQHLGAHLRDLLSQACNVVLGLTGQTQLLAHSPETLEFISLRNTYLDPLHLLQAELLSRSRNREASLDSPLELALLVSVAGIAAGLRNTG.

Residues histidine 140 and lysine 545 contribute to the active site.

The protein belongs to the PEPCase type 1 family. The cofactor is Mg(2+).

It carries out the reaction oxaloacetate + phosphate = phosphoenolpyruvate + hydrogencarbonate. Functionally, forms oxaloacetate, a four-carbon dicarboxylic acid source for the tricarboxylic acid cycle. This is Phosphoenolpyruvate carboxylase from Pseudomonas syringae pv. syringae (strain B728a).